The primary structure comprises 602 residues: Aspartate--tRNA(Asp/Asn) ligase (602 aa).

E175 contributes to the L-aspartate binding site. Residues 199 to 202 (QIFK) are aspartate. Position 221 (R221) interacts with L-aspartate. Residues 221-223 (RDE) and Q230 contribute to the ATP site. Residue H458 participates in L-aspartate binding. E492 contributes to the ATP binding site. An L-aspartate-binding site is contributed by R499. 544 to 547 (GLDR) is an ATP binding site.

Belongs to the class-II aminoacyl-tRNA synthetase family. Type 1 subfamily. As to quaternary structure, homodimer.

It is found in the cytoplasm. It catalyses the reaction tRNA(Asx) + L-aspartate + ATP = L-aspartyl-tRNA(Asx) + AMP + diphosphate. Functionally, aspartyl-tRNA synthetase with relaxed tRNA specificity since it is able to aspartylate not only its cognate tRNA(Asp) but also tRNA(Asn). Reaction proceeds in two steps: L-aspartate is first activated by ATP to form Asp-AMP and then transferred to the acceptor end of tRNA(Asp/Asn). The chain is Aspartate--tRNA(Asp/Asn) ligase from Cupriavidus metallidurans (strain ATCC 43123 / DSM 2839 / NBRC 102507 / CH34) (Ralstonia metallidurans).